The chain runs to 301 residues: Polyamine aminopropyltransferase (301 aa).

The PABS domain maps to 4 to 240 (WHWLLEWQTP…GLWGFVYGGV (237 aa)). Q33 lines the S-methyl-5'-thioadenosine pocket. The spermidine site is built by H64 and E89. S-methyl-5'-thioadenosine-binding positions include D109 and 141–142 (DG). D159 acts as the Proton acceptor in catalysis.

Belongs to the spermidine/spermine synthase family. Homotrimer.

Its subcellular location is the cytoplasm. The enzyme catalyses S-adenosyl 3-(methylsulfanyl)propylamine + putrescine = S-methyl-5'-thioadenosine + spermidine + H(+). It carries out the reaction S-adenosyl 3-(methylsulfanyl)propylamine + propane-1,3-diamine = norspermidine + S-methyl-5'-thioadenosine + H(+). The catalysed reaction is norspermidine + S-adenosyl 3-(methylsulfanyl)propylamine = norspermine + S-methyl-5'-thioadenosine + H(+). It catalyses the reaction S-adenosyl 3-(methylsulfanyl)propylamine + spermidine = thermospermine + S-methyl-5'-thioadenosine + H(+). Its pathway is amine and polyamine biosynthesis; spermidine biosynthesis; spermidine from putrescine: step 1/1. Its activity is regulated as follows. Competitively inhibited by 5-methylthioadenosine, 5-methylthiotubercidin, S-adenosyl(5)-3-thiopropylamine and S-adenosyl-3-thio-l,8-diaminooctane. Involved in the biosynthesis of polyamines which are thought to support the growth of thermophilic microorganisms under high-temperature conditions. It seems that long-chain and branched-chain of polyamines effectively stabilize DNA and RNA, respectively. Catalyzes the irreversible transfer of a propylamine group from the amino donor S-adenosylmethioninamine (decarboxy-AdoMet) to various amine acceptors such as putrescine (1,4-diaminobutane), 1,3-diaminopropane, sym-norspermidine and spermidine. The biosynthesis of caldopentamine from norspermine has been also observed, but with a very low activity. The reaction involves a nucleophilic attack on the C-3 methylene of the propylamine moiety adjacent to the positively charged sulfur of decarboxy-AdoMet. S-adenosylmethioninamine is the only amino donor. This chain is Polyamine aminopropyltransferase, found in Saccharolobus solfataricus (strain ATCC 35092 / DSM 1617 / JCM 11322 / P2) (Sulfolobus solfataricus).